Reading from the N-terminus, the 265-residue chain is U6 snRNA phosphodiesterase 1 (265 aa).

Positions 1–72 are disordered; it reads MSAAPLVGYS…DSTKHGGRVR (72 aa). Residues 20-31 are compositionally biased toward basic and acidic residues; the sequence is DGMRTRPGDGSH. Residue histidine 120 is the Proton acceptor of the active site. 120–122 is an AMP binding site; the sequence is HLS. Residues glutamine 164, tyrosine 202, and 206–210 each bind UMP; that span reads SFHLS. Residues tyrosine 202 and 204–210 contribute to the AMP site; that span reads DPSFHLS. Histidine 208 (proton donor) is an active-site residue.

This sequence belongs to the 2H phosphoesterase superfamily. USB1 family. In terms of assembly, interacts with PLRG1, CDC5L and PRPF19.

The protein localises to the nucleus. It catalyses the reaction a 3'-end uridylyl-uridine-RNA = a 3'-end 2',3'-cyclophospho-uridine-RNA + uridine. The enzyme catalyses a 3'-end uridylyl-adenosine-RNA = a 3'-end 2',3'-cyclophospho-uridine-RNA + adenosine. 3'-5' RNA exonuclease activity is inhibited by a 3' phosphate terminated RNA. In terms of biological role, 3'-5' RNA exonuclease that trims the 3' end of oligo(U) and oligo(A) tracts of the pre-U6 small nuclear RNA (snRNA) molecule, leading to the formation of a mature U6 snRNA 3' end-terminated with a 2',3'-cyclic phosphate. Participates in the U6 snRNA 3' end processing that prevents U6 snRNA degradation. In addition also removes uridines from the 3' end of U6atac snRNA and possibly the vault RNA VTRNA1-1. The protein is U6 snRNA phosphodiesterase 1 of Homo sapiens (Human).